The following is a 375-amino-acid chain: Queuine tRNA-ribosyltransferase (375 aa).

Asp-94 serves as the catalytic Proton acceptor. Substrate-binding positions include 94–98, Asp-148, Gln-191, and Gly-218; that span reads DSGGF. An RNA binding region spans residues 249-255; it reads GVGTPED. Asp-268 serves as the catalytic Nucleophile. The interval 273 to 277 is RNA binding; important for wobble base 34 recognition; sequence TRIAR. Residues Cys-306, Cys-308, Cys-311, and His-337 each coordinate Zn(2+).

The protein belongs to the queuine tRNA-ribosyltransferase family. As to quaternary structure, homodimer. Within each dimer, one monomer is responsible for RNA recognition and catalysis, while the other monomer binds to the replacement base PreQ1. The cofactor is Zn(2+).

It carries out the reaction 7-aminomethyl-7-carbaguanine + guanosine(34) in tRNA = 7-aminomethyl-7-carbaguanosine(34) in tRNA + guanine. The protein operates within tRNA modification; tRNA-queuosine biosynthesis. Catalyzes the base-exchange of a guanine (G) residue with the queuine precursor 7-aminomethyl-7-deazaguanine (PreQ1) at position 34 (anticodon wobble position) in tRNAs with GU(N) anticodons (tRNA-Asp, -Asn, -His and -Tyr). Catalysis occurs through a double-displacement mechanism. The nucleophile active site attacks the C1' of nucleotide 34 to detach the guanine base from the RNA, forming a covalent enzyme-RNA intermediate. The proton acceptor active site deprotonates the incoming PreQ1, allowing a nucleophilic attack on the C1' of the ribose to form the product. After dissociation, two additional enzymatic reactions on the tRNA convert PreQ1 to queuine (Q), resulting in the hypermodified nucleoside queuosine (7-(((4,5-cis-dihydroxy-2-cyclopenten-1-yl)amino)methyl)-7-deazaguanosine). The sequence is that of Queuine tRNA-ribosyltransferase from Caldanaerobacter subterraneus subsp. tengcongensis (strain DSM 15242 / JCM 11007 / NBRC 100824 / MB4) (Thermoanaerobacter tengcongensis).